The chain runs to 250 residues: Small ribosomal subunit protein uS2 (250 aa).

This sequence belongs to the universal ribosomal protein uS2 family.

This is Small ribosomal subunit protein uS2 from Paraburkholderia phytofirmans (strain DSM 17436 / LMG 22146 / PsJN) (Burkholderia phytofirmans).